The chain runs to 94 residues: Small ribosomal subunit protein uS19 (94 aa).

Belongs to the universal ribosomal protein uS19 family.

Protein S19 forms a complex with S13 that binds strongly to the 16S ribosomal RNA. This Clostridium botulinum (strain Langeland / NCTC 10281 / Type F) protein is Small ribosomal subunit protein uS19.